Here is a 196-residue protein sequence, read N- to C-terminus: MSPLPPSAEACRDELLNRLAREAYRHGDFTLASGRQSNHYVNCKPVSLSGSGLELLGLALLKYVEPDAVCVAGLTLGADPLVSAVAMAAAQAERTLNALIVRKQAKGHGTAAWLEGPLPPSGARITVLEDVVTTGGSSLKAVQQLRETGYLVTRVVTIVDRQEGGEEALNAAELELVSLYQLNQVAERARQLETET.

Residues Arg-102, Lys-103, Lys-106, His-108, and 129–137 contribute to the 5-phospho-alpha-D-ribose 1-diphosphate site; that span reads EDVVTTGGS. The orotate site is built by Thr-133 and Arg-161.

It belongs to the purine/pyrimidine phosphoribosyltransferase family. PyrE subfamily. Homodimer. It depends on Mg(2+) as a cofactor.

The enzyme catalyses orotidine 5'-phosphate + diphosphate = orotate + 5-phospho-alpha-D-ribose 1-diphosphate. Its pathway is pyrimidine metabolism; UMP biosynthesis via de novo pathway; UMP from orotate: step 1/2. Functionally, catalyzes the transfer of a ribosyl phosphate group from 5-phosphoribose 1-diphosphate to orotate, leading to the formation of orotidine monophosphate (OMP). This Prochlorococcus marinus (strain MIT 9303) protein is Orotate phosphoribosyltransferase.